Consider the following 294-residue polypeptide: Foldase protein PrsA 1 (294 aa).

The first 21 residues, 1 to 21, serve as a signal peptide directing secretion; that stretch reads MTKLKKVMISVIAATLLLLAG. Cys-22 carries the N-palmitoyl cysteine lipid modification. Cys-22 carries the S-diacylglycerol cysteine lipid modification. Residues 135–226 form the PpiC domain; that stretch reads EPDITVRHIL…YGYHLIQLVK (92 aa).

This sequence belongs to the PrsA family.

Its subcellular location is the cell membrane. The catalysed reaction is [protein]-peptidylproline (omega=180) = [protein]-peptidylproline (omega=0). Plays a major role in protein secretion by helping the post-translocational extracellular folding of several secreted proteins. This chain is Foldase protein PrsA 1 (prsA1), found in Listeria monocytogenes serovar 1/2a (strain ATCC BAA-679 / EGD-e).